A 429-amino-acid chain; its full sequence is Serine carboxypeptidase-like (429 aa).

Cystine bridges form between C58–C298, C226–C241, and C264–C269. An N-linked (GlcNAc...) asparagine glycan is attached at N76. The active site involves S148. D336 is a catalytic residue. C339 is a substrate binding site. H393 is a catalytic residue. N-linked (GlcNAc...) asparagine glycosylation is found at N414 and N417.

Belongs to the peptidase S10 family. In terms of tissue distribution, abundant in germinated embryos composed of leaf, root, and scutellum.

The protein is Serine carboxypeptidase-like (CBP31) of Oryza sativa subsp. japonica (Rice).